The sequence spans 121 residues: Putative membrane protein insertion efficiency factor (121 aa).

This sequence belongs to the UPF0161 family.

The protein resides in the cell membrane. Functionally, could be involved in insertion of integral membrane proteins into the membrane. In Rhodococcus opacus (strain B4), this protein is Putative membrane protein insertion efficiency factor.